We begin with the raw amino-acid sequence, 275 residues long: Bis(5'-nucleosyl)-tetraphosphatase, symmetrical (275 aa).

The protein belongs to the Ap4A hydrolase family.

It catalyses the reaction P(1),P(4)-bis(5'-adenosyl) tetraphosphate + H2O = 2 ADP + 2 H(+). Its function is as follows. Hydrolyzes diadenosine 5',5'''-P1,P4-tetraphosphate to yield ADP. The polypeptide is Bis(5'-nucleosyl)-tetraphosphatase, symmetrical (Hamiltonella defensa subsp. Acyrthosiphon pisum (strain 5AT)).